A 343-amino-acid polypeptide reads, in one-letter code: Putative kinase HI_0665 (343 aa).

Residue Asp209 is the Proton acceptor of the active site.

Belongs to the HipA Ser/Thr kinase family.

The protein is Putative kinase HI_0665 of Haemophilus influenzae (strain ATCC 51907 / DSM 11121 / KW20 / Rd).